The following is a 200-amino-acid chain: Phospholipase A2 inhibitor CNF (200 aa).

The first 19 residues, 1-19, serve as a signal peptide directing secretion; that stretch reads MKYLHTICLLFIFVARGNS. Disulfide bonds link C22-C46, C25-C32, C39-C67, C73-C94, C95-C100, C118-C143, C136-C165, and C169-C191. The N-linked (GlcNAc...) asparagine; partial glycan is linked to N176.

In terms of assembly, occurs as a mixture of oligomers. Tetrameric arrangement appears to be the predominant quaternary structure. Interacts with phospholipase A2 crotoxin basic subunit CBd; the interaction leads to dissociation of the CA-CB heterodimer and to inhibition of PLA2 activity of the CB subunit. Post-translationally, the carbohydrate moiety increases the inhibition capacity of CNF, but is not essential for activity and for oligomerization. As to expression, expressed by the liver.

The protein localises to the secreted. In terms of biological role, inhibits the PLA2 activity of crotoxin (CTX) by replacing the acid subunit (CA) in the CTX complex. Displays a pro-inflammatory action through activation of important main signaling pathways for human leukocytes, in vitro. Abolishes both the muscle-paralyzing and muscle-damaging activities of CTX in mice phrenic nerve-diaphragm muscle preparations. In Crotalus durissus terrificus (South American rattlesnake), this protein is Phospholipase A2 inhibitor CNF.